Consider the following 160-residue polypeptide: uncharacterized protein (160 aa).

The Cupin type-2 domain occupies 37 to 110; sequence LMSLKPKEDI…TDYLKLYTIY (74 aa).

It localises to the virion. This is an uncharacterized protein from Acanthamoeba polyphaga mimivirus (APMV).